The following is a 108-amino-acid chain: Large ribosomal subunit protein uL24 (108 aa).

Belongs to the universal ribosomal protein uL24 family. Part of the 50S ribosomal subunit.

Functionally, one of two assembly initiator proteins, it binds directly to the 5'-end of the 23S rRNA, where it nucleates assembly of the 50S subunit. One of the proteins that surrounds the polypeptide exit tunnel on the outside of the subunit. The polypeptide is Large ribosomal subunit protein uL24 (Geobacter metallireducens (strain ATCC 53774 / DSM 7210 / GS-15)).